Consider the following 990-residue polypeptide: DNA ligase 4 (990 aa).

The tract at residues 57-84 is disordered; the sequence is TQKKGRQPPGPRRKAGPHGHSNLSPHEA. ATP-binding residues include glutamate 324, lysine 326, leucine 327, arginine 331, glutamate 394, phenylalanine 436, glutamate 496, lysine 501, lysine 518, and lysine 520. Residue lysine 326 is the N6-AMP-lysine intermediate of the active site. Glutamate 394 is a binding site for Mg(2+). Glutamate 496 serves as a coordination point for Mg(2+). BRCT domains lie at 728 to 821 and 900 to 989; these read PQSK…LPYL and YMFS…RYQW.

The protein belongs to the ATP-dependent DNA ligase family. Mg(2+) is required as a cofactor.

The protein resides in the nucleus. It catalyses the reaction ATP + (deoxyribonucleotide)n-3'-hydroxyl + 5'-phospho-(deoxyribonucleotide)m = (deoxyribonucleotide)n+m + AMP + diphosphate.. Its function is as follows. DNA ligase involved in DNA non-homologous end joining (NHEJ); required for double-strand break (DSB) repair. The polypeptide is DNA ligase 4 (LIG4) (Phaeosphaeria nodorum (strain SN15 / ATCC MYA-4574 / FGSC 10173) (Glume blotch fungus)).